The following is a 184-amino-acid chain: Peptidyl-tRNA hydrolase (184 aa).

Tyrosine 17 serves as a coordination point for tRNA. The active-site Proton acceptor is histidine 22. Positions 71, 73, and 119 each coordinate tRNA.

Belongs to the PTH family. Monomer.

It localises to the cytoplasm. It catalyses the reaction an N-acyl-L-alpha-aminoacyl-tRNA + H2O = an N-acyl-L-amino acid + a tRNA + H(+). Hydrolyzes ribosome-free peptidyl-tRNAs (with 1 or more amino acids incorporated), which drop off the ribosome during protein synthesis, or as a result of ribosome stalling. In terms of biological role, catalyzes the release of premature peptidyl moieties from peptidyl-tRNA molecules trapped in stalled 50S ribosomal subunits, and thus maintains levels of free tRNAs and 50S ribosomes. In Corynebacterium diphtheriae (strain ATCC 700971 / NCTC 13129 / Biotype gravis), this protein is Peptidyl-tRNA hydrolase.